Here is a 456-residue protein sequence, read N- to C-terminus: Cysteine--tRNA ligase (456 aa).

C29 contributes to the Zn(2+) binding site. The 'HIGH' region signature appears at 31-41 (VTVYDYCHVGH). Residues C210, H235, and E239 each coordinate Zn(2+). The 'KMSKS' region motif lies at 267-271 (KMSKS). Residue K270 participates in ATP binding.

It belongs to the class-I aminoacyl-tRNA synthetase family. In terms of assembly, monomer. Zn(2+) serves as cofactor.

Its subcellular location is the cytoplasm. It carries out the reaction tRNA(Cys) + L-cysteine + ATP = L-cysteinyl-tRNA(Cys) + AMP + diphosphate. This Hydrogenovibrio crunogenus (strain DSM 25203 / XCL-2) (Thiomicrospira crunogena) protein is Cysteine--tRNA ligase.